A 744-amino-acid polypeptide reads, in one-letter code: Prestin (744 aa).

Topologically, residues 1–79 are cytoplasmic; that stretch reads MDHAEENEIP…WLPAYKFKEY (79 aa). A helical transmembrane segment spans residues 80-105; that stretch reads VLGDLVSGISTGVLQLPQGLAFAMLA. Residues 106-109 lie on the Extracellular side of the membrane; that stretch reads AVPP. The chain crosses the membrane as a helical span at residues 110-125; the sequence is VFGLYSSFYPVIMYCF. Over 126–137 the chain is Cytoplasmic; the sequence is FGTSRHISIGPF. Residues 138 to 147 traverse the membrane as a helical segment; that stretch reads AVISLMIGGV. Residues 148 to 178 lie on the Extracellular side of the membrane; that stretch reads AVRLVPDDIVIPGGVNATNGTEARDALRVKV. An Involved in motor function motif is present at residues 158–168; the sequence is IPGGVNATNGT. N-linked (GlcNAc...) asparagine glycans are attached at residues Asn-163 and Asn-166. A helical membrane pass occupies residues 179–196; the sequence is AMSVTLLSGIIQFCLGVC. Topologically, residues 197 to 208 are cytoplasmic; the sequence is RFGFVAIYLTEP. A helical membrane pass occupies residues 209-230; it reads LVRGFTTAAAVHVFTSMLKYLF. Over 231–243 the chain is Extracellular; the sequence is GVKTKRYSGIFSV. Positions 244–252 form an intramembrane region, helical; that stretch reads VYSTVAVLQ. Over 253-258 the chain is Extracellular; the sequence is NVKNLN. A helical membrane pass occupies residues 259-282; that stretch reads VCSLGVGLMVFGLLLGGKEFNERF. At 283 to 291 the chain is on the cytoplasmic side; it reads KEKLPAPIP. The chain crosses the membrane as a helical span at residues 292–304; the sequence is LEFFAVVMGTGIS. The Extracellular portion of the chain corresponds to 305 to 337; the sequence is AGFNLHESYSVDVVGTLPLGLLPPANPDTSLFH. Residues 338 to 361 form a helical membrane-spanning segment; the sequence is LVYVDAIAIAIVGFSVTISMAKTL. Residues 362-370 lie on the Cytoplasmic side of the membrane; that stretch reads ANKHGYQVD. The chain crosses the membrane as a helical span at residues 371 to 388; the sequence is GNQELIALGICNSIGSLF. Residues 389–396 are Extracellular-facing; the sequence is QTFSISCS. Residues 397-406 form a helical membrane-spanning segment; the sequence is LSRSLVQEGT. Ser-398 is a salicylate binding site. Residues 407–410 lie on the Cytoplasmic side of the membrane; the sequence is GGKT. A helical transmembrane segment spans residues 411–429; the sequence is QLAGCLASLMILLVILATG. The Extracellular portion of the chain corresponds to 430–436; the sequence is FLFESLP. The helical transmembrane segment at 437-455 threads the bilayer; sequence QAVLSAIVIVNLKGMFMQF. Over 456–469 the chain is Cytoplasmic; the sequence is SDLPFFWRTSKIEL. A helical transmembrane segment spans residues 470 to 484; that stretch reads TIWLTTFVSSLFLGL. Residue Asp-485 is a topological domain, extracellular. Residues 486–497 traverse the membrane as a helical segment; the sequence is YGLITAVIIALL. Topologically, residues 498-744 are cytoplasmic; it reads TVIYRTQSPS…PNATPTTPEA (247 aa). The interval 505–718 is extended region for STAS domain; it reads SPSYKVLGQL…AVLGSHVREA (214 aa). One can recognise an STAS domain in the interval 525–713; it reads AYEEVKEIPG…HSIHDAVLGS (189 aa). A disordered region spans residues 717 to 744; that stretch reads EAMAEQEASAPPPQDDMEPNATPTTPEA.

This sequence belongs to the SLC26A/SulP transporter (TC 2.A.53) family. As to quaternary structure, homodimer. Interacts (via STAS domain) with CALM; this interaction is calcium-dependent and the STAS domain interacts with only one lobe of CALM which is an elongated conformation. Interacts with MYH1. Highly expressed in mature outer hair cells, but not in inner hair cells or other cells of the basilar membrane and the organ of Corti.

Its subcellular location is the lateral cell membrane. The enzyme catalyses 2 hydrogencarbonate(in) + chloride(out) = 2 hydrogencarbonate(out) + chloride(in). In terms of biological role, voltage-sensitive motor protein that drives outer hair cell (OHC) electromotility (eM) and participates in sound amplification in the hearing organ. Converts changes in the transmembrane electric potential into mechanical displacements resulting in the coupling of its expansion to movement of a charged voltage sensor across the lipid membrane. The nature of the voltage sensor is not completely clear, and two models compete. In the first model, acts as an incomplete transporter where intracellular chloride anion acts as extrinsic voltage sensor that drives conformational change in the protein which is sufficient to produce a length change in the plane of the membrane and hence in the length of the OHC. The second model in which multiple charged amino acid residues are distributed at the intracellular and extracellular membrane interfaces that form an intrinsic voltage sensor, whose movement produces the non-linear capacitance (NLC). However, the effective voltage sensor may be the result of a hybrid voltage sensor assembled from intrinsic charge (charged residues) and extrinsic charge (bound anion). Notably, binding of anions to the anion-binding pocket partially neutralizes the intrinsic positive charge rather than to form an electrically negative sensor, therefore remaining charge may serve as voltage sensor that, after depolarization, moves from down (expanded state) to up (contracted) conformation, which is accompanied by an eccentric contraction of the intermembrane cross-sectional area of the protein as well as a major increase in the hydrophobic thickness of the protein having as consequences the plasma membrane thickening and the cell contraction after membrane depolarization. The anion-binding pocket transits from the inward-open (Down) state, where it is exposed toward the intracellular solvent in the absence of anion, to the occluded (Up) state upon anion binding. Salicylate competes for the anion-binding site and inhibits the voltage-sensor movement, and therefore inhibits the charge transfer and electromotility by displacing Cl(-) from the anion-binding site and by preventing the structural transitions to the contracted state. In addition, can act as a weak Cl(-)/HCO3 (-) antiporter across the cell membrane and so regulate the intracellular pH of the outer hair cells (OHCs), while firstly found as being unable to mediate electrogenic anion transport. Moreover, supports a role in cardiac mechanical amplification serving as an elastic element to enhance the actomyosin- based sarcomere contraction system. The polypeptide is Prestin (Meriones unguiculatus (Mongolian jird)).